Reading from the N-terminus, the 100-residue chain is Urease subunit gamma (100 aa).

It belongs to the urease gamma subunit family. Heterotrimer of UreA (gamma), UreB (beta) and UreC (alpha) subunits. Three heterotrimers associate to form the active enzyme.

The protein localises to the cytoplasm. It catalyses the reaction urea + 2 H2O + H(+) = hydrogencarbonate + 2 NH4(+). It participates in nitrogen metabolism; urea degradation; CO(2) and NH(3) from urea (urease route): step 1/1. The protein is Urease subunit gamma of Pseudomonas entomophila (strain L48).